The chain runs to 491 residues: Ribulose-1,5 bisphosphate carboxylase/oxygenase large subunit N-methyltransferase, chloroplastic (491 aa).

The region spanning 67–291 (EGVVTTKTPV…AGDQLFIQYD (225 aa)) is the SET domain.

This sequence belongs to the class V-like SAM-binding methyltransferase superfamily. Plant protein-lysine LSMT methyltransferase family.

It localises to the plastid. It is found in the chloroplast. The enzyme catalyses L-lysyl-[ribulose-1,5-bisphosphate carboxylase] + 3 S-adenosyl-L-methionine = N(6),N(6),N(6)-trimethyl-L-lysyl-[ribulose-1,5-bisphosphate carboxylase] + 3 S-adenosyl-L-homocysteine + 3 H(+). Functionally, methylates 'Lys-14' of the large subunit of RuBisCO. The protein is Ribulose-1,5 bisphosphate carboxylase/oxygenase large subunit N-methyltransferase, chloroplastic (RBCMT) of Nicotiana tabacum (Common tobacco).